The primary structure comprises 383 residues: Chorismate synthase (383 aa).

Residues R39 and R45 each coordinate NADP(+). Residues 128–130, G291, 306–310, and R332 contribute to the FMN site; these read RAS and KPIAT.

It belongs to the chorismate synthase family. In terms of assembly, homotetramer. Requires FMNH2 as cofactor.

It catalyses the reaction 5-O-(1-carboxyvinyl)-3-phosphoshikimate = chorismate + phosphate. It functions in the pathway metabolic intermediate biosynthesis; chorismate biosynthesis; chorismate from D-erythrose 4-phosphate and phosphoenolpyruvate: step 7/7. Functionally, catalyzes the anti-1,4-elimination of the C-3 phosphate and the C-6 proR hydrogen from 5-enolpyruvylshikimate-3-phosphate (EPSP) to yield chorismate, which is the branch point compound that serves as the starting substrate for the three terminal pathways of aromatic amino acid biosynthesis. This reaction introduces a second double bond into the aromatic ring system. In Thermus thermophilus (strain ATCC BAA-163 / DSM 7039 / HB27), this protein is Chorismate synthase.